Reading from the N-terminus, the 590-residue chain is Leishmanolysin (590 aa).

An N-terminal signal peptide occupies residues 1 to 39 (MSVDSSSTHRHRSVAARLVRLAAAGAAVIAAVGTAAAWA). Residues 40-87 (HAGAVQHRCIHDAMQARVRQSVARHHTAPGAVSAVGLSYVTLGAAPTV) constitute a propeptide, activation peptide. 2 disulfide bridges follow: cysteine 112–cysteine 129 and cysteine 178–cysteine 217. A Zn(2+)-binding site is contributed by histidine 251. Glutamate 252 is an active-site residue. Zn(2+) is bound at residue histidine 255. Asparagine 287 is a glycosylation site (N-linked (GlcNAc...) asparagine). 7 disulfides stabilise this stretch: cysteine 301–cysteine 373, cysteine 380–cysteine 443, cysteine 393–cysteine 412, cysteine 402–cysteine 477, cysteine 454–cysteine 498, cysteine 503–cysteine 553, and cysteine 523–cysteine 546. Histidine 321 provides a ligand contact to Zn(2+). Residue asparagine 565 is the site of GPI-anchor amidated asparagine attachment. A propeptide spans 566-590 (AAAGRRGPRAAATALLVAALLAVAL) (removed in mature form).

It belongs to the peptidase M8 family. Requires Zn(2+) as cofactor.

Its subcellular location is the cell membrane. The catalysed reaction is Preference for hydrophobic residues at P1 and P1' and basic residues at P2' and P3'. A model nonapeptide is cleaved at -Ala-Tyr-|-Leu-Lys-Lys-.. Its function is as follows. Has an integral role during the infection of macrophages in the mammalian host. The protein is Leishmanolysin (gp63) of Leishmania donovani.